The sequence spans 100 residues: Testis development-related protein 1 (100 aa).

The segment at 73–100 (GLGSLGGQDSSGSLVQRASCELESPYEL) is disordered.

In terms of tissue distribution, expressed in the testis but not in any other non-reproductive tissues (at protein level). Mainly located in spermatogenic cells in seminiferous tubules of adult testis.

The protein localises to the cytoplasm. This is Testis development-related protein 1 (TDRG1) from Homo sapiens (Human).